A 151-amino-acid chain; its full sequence is SsrA-binding protein (151 aa).

Belongs to the SmpB family.

The protein resides in the cytoplasm. Its function is as follows. Required for rescue of stalled ribosomes mediated by trans-translation. Binds to transfer-messenger RNA (tmRNA), required for stable association of tmRNA with ribosomes. tmRNA and SmpB together mimic tRNA shape, replacing the anticodon stem-loop with SmpB. tmRNA is encoded by the ssrA gene; the 2 termini fold to resemble tRNA(Ala) and it encodes a 'tag peptide', a short internal open reading frame. During trans-translation Ala-aminoacylated tmRNA acts like a tRNA, entering the A-site of stalled ribosomes, displacing the stalled mRNA. The ribosome then switches to translate the ORF on the tmRNA; the nascent peptide is terminated with the 'tag peptide' encoded by the tmRNA and targeted for degradation. The ribosome is freed to recommence translation, which seems to be the essential function of trans-translation. This Chlamydia pneumoniae (Chlamydophila pneumoniae) protein is SsrA-binding protein.